The following is a 410-amino-acid chain: Chitinase-3-like protein 1 (410 aa).

The N-terminal stretch at 1–48 (MGVKAAQTGIWASQGQSIRVVGFQAQTAHRAICLLGFVVLVLLQCCSA) is a signal peptide. In terms of domain architecture, GH18 spans 49 to 410 (YKLVCYYTSW…NAIKDALAAT (362 aa)). C53 and C78 are joined by a disulfide. N87 carries an N-linked (GlcNAc...) asparagine glycan. Chitin is bound by residues 97–98 (EW), 124–127 (GGWN), Y168, 231–234 (MTYD), and R290. The cysteines at positions 327 and 391 are disulfide-linked. The important for AKT1 activation and IL8 production stretch occupies residues 351 to 365 (QWVGYDDQESVKSKV). W379 is a chitin binding site.

The protein belongs to the glycosyl hydrolase 18 family. Monomer.

Its subcellular location is the secreted. It is found in the extracellular space. The protein localises to the cytoplasm. It localises to the perinuclear region. The protein resides in the endoplasmic reticulum. Its function is as follows. Carbohydrate-binding lectin with a preference for chitin. Has no chitinase activity. May play a role in tissue remodeling and in the capacity of cells to respond to and cope with changes in their environment. Plays a role in T-helper cell type 2 (Th2) inflammatory response and IL-13-induced inflammation, regulating allergen sensitization, inflammatory cell apoptosis, dendritic cell accumulation and M2 macrophage differentiation. Facilitates invasion of pathogenic enteric bacteria into colonic mucosa and lymphoid organs. Mediates activation of AKT1 signaling pathway and subsequent IL8 production in colonic epithelial cells. Regulates antibacterial responses in lung by contributing to macrophage bacterial killing, controlling bacterial dissemination and augmenting host tolerance. Also regulates hyperoxia-induced injury, inflammation and epithelial apoptosis in lung. This Pongo abelii (Sumatran orangutan) protein is Chitinase-3-like protein 1 (CHI3L1).